Reading from the N-terminus, the 180-residue chain is Hypoxanthine-guanine phosphoribosyltransferase (180 aa).

Diphosphate-binding residues include K43 and G44. The Mg(2+) site is built by E99 and D100. D103 (proton acceptor) is an active-site residue. GMP contacts are provided by residues K131, 152–153, and D159; that span reads FI. Residue R165 coordinates diphosphate.

The protein belongs to the purine/pyrimidine phosphoribosyltransferase family. Mg(2+) serves as cofactor.

It is found in the cytoplasm. The catalysed reaction is IMP + diphosphate = hypoxanthine + 5-phospho-alpha-D-ribose 1-diphosphate. It carries out the reaction GMP + diphosphate = guanine + 5-phospho-alpha-D-ribose 1-diphosphate. It functions in the pathway purine metabolism; IMP biosynthesis via salvage pathway; IMP from hypoxanthine: step 1/1. The protein operates within purine metabolism; GMP biosynthesis via salvage pathway; GMP from guanine: step 1/1. In terms of biological role, purine salvage pathway enzyme that catalyzes the transfer of the ribosyl-5-phosphate group from 5-phospho-alpha-D-ribose 1-diphosphate (PRPP) to the N9 position of the 6-oxopurines hypoxanthine and guanine to form the corresponding ribonucleotides IMP (inosine 5'-monophosphate) and GMP (guanosine 5'-monophosphate), with the release of PPi. This chain is Hypoxanthine-guanine phosphoribosyltransferase (hpt), found in Streptococcus agalactiae serotype III (strain NEM316).